We begin with the raw amino-acid sequence, 234 residues long: 3-deoxy-manno-octulosonate cytidylyltransferase (234 aa).

It belongs to the KdsB family.

The protein resides in the cytoplasm. The enzyme catalyses 3-deoxy-alpha-D-manno-oct-2-ulosonate + CTP = CMP-3-deoxy-beta-D-manno-octulosonate + diphosphate. Its pathway is nucleotide-sugar biosynthesis; CMP-3-deoxy-D-manno-octulosonate biosynthesis; CMP-3-deoxy-D-manno-octulosonate from 3-deoxy-D-manno-octulosonate and CTP: step 1/1. It participates in bacterial outer membrane biogenesis; lipopolysaccharide biosynthesis. Functionally, activates KDO (a required 8-carbon sugar) for incorporation into bacterial lipopolysaccharide in Gram-negative bacteria. The sequence is that of 3-deoxy-manno-octulosonate cytidylyltransferase from Aquifex aeolicus (strain VF5).